The primary structure comprises 199 residues: MIIHNLGIKDYTEIWEQMKEFTATRDSNSCDELWLLEHYPVYTQGQAGKPEHVLNPNSIKIVQSDRGGQVTYHGPGQLVAYVLMDIRRRNLGIRTLVVKLEEILISVLEHYRIPANIRSGAPGVYVGEKKVASIGLRVKNGCTYHGIALNVNMDLSPFLGINPCGFAKMEMTQMSHFHPNIQLEDVSQHFVQYFLTQFK.

The 173-residue stretch at 27–199 (SNSCDELWLL…FVQYFLTQFK (173 aa)) folds into the BPL/LPL catalytic domain. Residues 66 to 73 (RGGQVTYH), 133 to 135 (SIG), and 146 to 148 (GIA) contribute to the substrate site. Cys164 acts as the Acyl-thioester intermediate in catalysis.

It belongs to the LipB family.

The protein localises to the cytoplasm. The catalysed reaction is octanoyl-[ACP] + L-lysyl-[protein] = N(6)-octanoyl-L-lysyl-[protein] + holo-[ACP] + H(+). Its pathway is protein modification; protein lipoylation via endogenous pathway; protein N(6)-(lipoyl)lysine from octanoyl-[acyl-carrier-protein]: step 1/2. Functionally, catalyzes the transfer of endogenously produced octanoic acid from octanoyl-acyl-carrier-protein onto the lipoyl domains of lipoate-dependent enzymes. Lipoyl-ACP can also act as a substrate although octanoyl-ACP is likely to be the physiological substrate. The chain is Octanoyltransferase from Legionella pneumophila (strain Paris).